A 332-amino-acid chain; its full sequence is D-lactate dehydrogenase (332 aa).

Residues 155–156 (RI), D175, 206–207 (VP), N212, 233–235 (FAR), and D259 each bind NAD(+). The active site involves R235. E264 is a catalytic residue. The active-site Proton donor is the H296.

The protein belongs to the D-isomer specific 2-hydroxyacid dehydrogenase family.

The catalysed reaction is (R)-lactate + NAD(+) = pyruvate + NADH + H(+). The chain is D-lactate dehydrogenase (ldhD) from Lactiplantibacillus plantarum (strain ATCC BAA-793 / NCIMB 8826 / WCFS1) (Lactobacillus plantarum).